The sequence spans 161 residues: Small ribosomal subunit protein uS9 (161 aa).

It belongs to the universal ribosomal protein uS9 family.

In Bartonella tribocorum (strain CIP 105476 / IBS 506), this protein is Small ribosomal subunit protein uS9.